The primary structure comprises 435 residues: Probable protein arginine N-methyltransferase 6 (435 aa).

Positions 1-48 (MQSGGDFSNGFHGDHHRELELEDKQGPSLSSFGRAKKRSHAGARDPRG) are disordered. Over residues 12–25 (HGDHHRELELEDKQ) the composition is skewed to basic and acidic residues. Residues 80-418 (DVAYFHSYAH…KENKRFMNIH (339 aa)) enclose the SAM-dependent MTase PRMT-type domain. The S-adenosyl-L-methionine site is built by histidine 93, arginine 102, glycine 126, aspartate 148, and glutamate 177. Residues glutamate 191 and glutamate 200 contribute to the active site. The disordered stretch occupies residues 333–377 (PAKNTSETSIASGSSSISPSGEVNQKKRTNPSDALVLSTSPESPP). Over residues 337 to 354 (TSETSIASGSSSISPSGE) the composition is skewed to low complexity.

Belongs to the class I-like SAM-binding methyltransferase superfamily. Protein arginine N-methyltransferase family. PRMT6 subfamily.

Functionally, arginine methyltransferase that can both catalyze the formation of omega-N monomethylarginine (MMA) and asymmetrical dimethylarginine (aDMA). The chain is Probable protein arginine N-methyltransferase 6 (PRMT6) from Arabidopsis thaliana (Mouse-ear cress).